Here is a 549-residue protein sequence, read N- to C-terminus: MNRRQTWSLLLIAFGLFYLVPLSNHGLWIPDETRYAQISQAMLLGGDWVSPHFLGLRYFEKPVAGYWMIALGQAVFGENLFGVRIASVVATALSVLLAYLLARRLWRDPRTSLACALLYASFGLIAGQSGYANLDPQFTFWVNLSLVALWYALDAGSRRARLLGWTLLGLACGMGFLTKGFLAWLLPVLVALPYMLWQRRWRELLGYGALAVLVALLVCLPWALAVHAREADYWRFFFWHEHIRRFAGEDAQHSRPWWFYLPLLAVACLPWSGLLPSALRQAWHERHQPPVAFLALWLLLPLAFFSLSRGKLPTYIMPCLLPLALLMGHALVQRLRQADSLALRGNGLLNLGLALLALAALAYLQLRKPVYQEEPFELFLVLLVIGAWAAAGLAQWRYPLRAWAAPLLASWVLIALLPAAMPNQVVQNKTPDLFVAEHLDELTGARHLLSNDLGAASALAWRLRRGDVTLYDTRGELKYGLSYPEHSQRSVPLADIRQWLWRARQDGSVAVLLRINSASDRYQLALLPGDGERYRNGNLVLAVLPQVRP.

12 helical membrane passes run 9–29, 80–100, 112–132, 136–156, 176–196, 204–224, 256–276, 288–308, 312–332, 346–366, 376–396, and 402–422; these read LLLI…GLWI, LFGV…LAYL, SLAC…SGYA, PQFT…LDAG, FLTK…PYML, LLGY…PWAL, PWWF…GLLP, QPPV…FSLS, LPTY…HALV, NGLL…YLQL, FELF…LAQW, and AWAA…AAMP.

Belongs to the glycosyltransferase 83 family.

The protein localises to the cell inner membrane. It catalyses the reaction 4-amino-4-deoxy-alpha-L-arabinopyranosyl di-trans,octa-cis-undecaprenyl phosphate + lipid IVA = lipid IIA + di-trans,octa-cis-undecaprenyl phosphate.. The protein operates within lipopolysaccharide metabolism; 4-amino-4-deoxy-beta-L-arabinose-lipid A biosynthesis. Its function is as follows. Catalyzes the transfer of the L-Ara4N moiety of the glycolipid undecaprenyl phosphate-alpha-L-Ara4N to lipid A. The modified arabinose is attached to lipid A and is required for resistance to polymyxin and cationic antimicrobial peptides. In Pseudomonas paraeruginosa (strain DSM 24068 / PA7) (Pseudomonas aeruginosa (strain PA7)), this protein is Undecaprenyl phosphate-alpha-4-amino-4-deoxy-L-arabinose arabinosyl transferase.